A 139-amino-acid chain; its full sequence is Actin-depolymerizing factor 1 (139 aa).

One can recognise an ADF-H domain in the interval 5–139 (SSGLAVNDEC…SLDIVRSRTN (135 aa)).

This sequence belongs to the actin-binding proteins ADF family. As to expression, expressed in pollen.

Its function is as follows. Actin-depolymerizing protein. Severs actin filaments (F-actin) and binds to actin monomers. The polypeptide is Actin-depolymerizing factor 1 (ADF1) (Zea mays (Maize)).